Consider the following 263-residue polypeptide: 3-methyl-2-oxobutanoate hydroxymethyltransferase (263 aa).

Mg(2+) is bound by residues Asp44 and Asp83. 3-methyl-2-oxobutanoate-binding positions include 44-45 (DS), Asp83, and Lys112. Glu114 is a Mg(2+) binding site. Glu181 (proton acceptor) is an active-site residue.

This sequence belongs to the PanB family. In terms of assembly, homodecamer; pentamer of dimers. It depends on Mg(2+) as a cofactor.

Its subcellular location is the cytoplasm. The enzyme catalyses 3-methyl-2-oxobutanoate + (6R)-5,10-methylene-5,6,7,8-tetrahydrofolate + H2O = 2-dehydropantoate + (6S)-5,6,7,8-tetrahydrofolate. It functions in the pathway cofactor biosynthesis; (R)-pantothenate biosynthesis; (R)-pantoate from 3-methyl-2-oxobutanoate: step 1/2. Its function is as follows. Catalyzes the reversible reaction in which hydroxymethyl group from 5,10-methylenetetrahydrofolate is transferred onto alpha-ketoisovalerate to form ketopantoate. The protein is 3-methyl-2-oxobutanoate hydroxymethyltransferase of Sulfurimonas denitrificans (strain ATCC 33889 / DSM 1251) (Thiomicrospira denitrificans (strain ATCC 33889 / DSM 1251)).